The chain runs to 120 residues: ATP-dependent Clp protease adapter protein ClpS (120 aa).

It belongs to the ClpS family. As to quaternary structure, binds to the N-terminal domain of the chaperone ClpA.

Functionally, involved in the modulation of the specificity of the ClpAP-mediated ATP-dependent protein degradation. This chain is ATP-dependent Clp protease adapter protein ClpS, found in Pseudomonas savastanoi pv. phaseolicola (strain 1448A / Race 6) (Pseudomonas syringae pv. phaseolicola (strain 1448A / Race 6)).